Here is a 179-residue protein sequence, read N- to C-terminus: Large ribosomal subunit protein uL5 (179 aa).

This sequence belongs to the universal ribosomal protein uL5 family. As to quaternary structure, part of the 50S ribosomal subunit; part of the 5S rRNA/L5/L18/L25 subcomplex. Contacts the 5S rRNA and the P site tRNA. Forms a bridge to the 30S subunit in the 70S ribosome.

Functionally, this is one of the proteins that bind and probably mediate the attachment of the 5S RNA into the large ribosomal subunit, where it forms part of the central protuberance. In the 70S ribosome it contacts protein S13 of the 30S subunit (bridge B1b), connecting the 2 subunits; this bridge is implicated in subunit movement. Contacts the P site tRNA; the 5S rRNA and some of its associated proteins might help stabilize positioning of ribosome-bound tRNAs. This is Large ribosomal subunit protein uL5 from Geobacillus thermodenitrificans (strain NG80-2).